Reading from the N-terminus, the 405-residue chain is Glutamate-pyruvate aminotransferase AlaA (405 aa).

Positions 41 and 179 each coordinate L-alanine. K240 is subject to N6-(pyridoxal phosphate)lysine. R378 lines the L-alanine pocket.

This sequence belongs to the class-I pyridoxal-phosphate-dependent aminotransferase family. In terms of assembly, homodimer. Requires pyridoxal 5'-phosphate as cofactor.

Its subcellular location is the cytoplasm. It catalyses the reaction L-alanine + 2-oxoglutarate = pyruvate + L-glutamate. It participates in amino-acid biosynthesis; L-alanine biosynthesis. In terms of biological role, involved in the biosynthesis of alanine. Catalyzes the transamination of pyruvate by glutamate, leading to the formation of L-alanine and 2-oxoglutarate. Is also able to catalyze the reverse reaction. The chain is Glutamate-pyruvate aminotransferase AlaA from Escherichia coli (strain K12).